We begin with the raw amino-acid sequence, 91 residues long: Ice-structuring protein 2A7 (91 aa).

Residues 1-21 (MALSLFTVGQLIFLFWTMRIT) form the signal peptide. The propeptide at 22 to 39 (EANPDPAAKAVPAAAAPD) is removed by a dipeptidylpeptidase.

This sequence belongs to the type-I AFP family. Detected in blood serum (at protein level).

It localises to the secreted. In terms of biological role, contributes to protect fish blood from freezing at subzero sea water temperatures. Lowers the blood freezing point. Binds to nascent ice crystals and prevents further growth. The polypeptide is Ice-structuring protein 2A7 (Pseudopleuronectes americanus (Winter flounder)).